Consider the following 106-residue polypeptide: Putative defensin-like protein 224 (106 aa).

Residues 1–23 form the signal peptide; sequence MKTLSLFFTLVILISSCVSNLMA. Disulfide bonds link Cys60–Cys78, Cys64–Cys84, and Cys68–Cys86.

The protein belongs to the DEFL family.

It is found in the secreted. This chain is Putative defensin-like protein 224, found in Arabidopsis thaliana (Mouse-ear cress).